The sequence spans 309 residues: MDALKSAGRAIIRSPSIAKQSWGGGKHKKLPENWTDTRETLLEGMLFHLKYLGMTLVEQPKGEELSATAVKRIVATAKASGKKLQKVILKVSPRGIILYDSTSNQLIENVSIYRISYCTADKMHDKVFAYIAQSQQNETLECHAFLCTKRKMAQAVTLTVAQAFKVAFEFWQVSRDKTEKREKSGSGGEGASSSQSDGSSSITSLKASASANLLDLEDCTKAFDVLNASDNHIEDLFRQNASNENNNIVWELDDGLDEAFARLAESRTNPQVLDIGLTANDLQSEECLSPSSWDKLELNPAEADELFMF.

One can recognise a PID domain in the interval Leu-41–Gln-195. Positions Glu-179–Ser-199 are disordered. Residues Leu-213 to Glu-217 carry the Clathrin box motif. The interval Trp-250–Leu-277 is AP-2 complex binding. A [DE]-X(1,2)-F-X-X-[FL]-X-X-X-R motif motif is present at residues Glu-258 to Arg-267.

In terms of assembly, interacts (via PID domain) with ldlr (via NPXY motif). Binds to soluble clathrin trimers and to the adapter protein complex 2 (AP-2, beta 2 subunit). Binds to phosphoinositides, which regulate clathrin bud assembly at the cell surface. Interacts with the VLDL receptor (vldlr). Interacts with the vitellogenin receptor. Expressed at high level during oogenesis and embryogenesis. Found in the oocyte vegetal cortex. Found at low level in the adult liver and spleen. Found at very low level in testis and heart.

The protein resides in the cytoplasm. Functionally, adapter protein (clathrin-associated sorting protein (CLASP)) required for efficient endocytosis of the LDL receptor (LDLR). Also involved in the vitellogenin receptor mediated endocytosis of nutrients during oogenesis. This chain is Low density lipoprotein receptor adapter protein 1-A, found in Xenopus laevis (African clawed frog).